We begin with the raw amino-acid sequence, 597 residues long: Elongation factor 4 (597 aa).

The region spanning D2–K184 is the tr-type G domain. Residues D14–T19 and N131–D134 each bind GTP.

It belongs to the TRAFAC class translation factor GTPase superfamily. Classic translation factor GTPase family. LepA subfamily.

The protein resides in the cell inner membrane. It carries out the reaction GTP + H2O = GDP + phosphate + H(+). Its function is as follows. Required for accurate and efficient protein synthesis under certain stress conditions. May act as a fidelity factor of the translation reaction, by catalyzing a one-codon backward translocation of tRNAs on improperly translocated ribosomes. Back-translocation proceeds from a post-translocation (POST) complex to a pre-translocation (PRE) complex, thus giving elongation factor G a second chance to translocate the tRNAs correctly. Binds to ribosomes in a GTP-dependent manner. This chain is Elongation factor 4, found in Burkholderia cenocepacia (strain HI2424).